A 260-amino-acid chain; its full sequence is Adenosine 5'-phosphosulfate reductase (260 aa).

Positions 130, 131, 213, and 216 each coordinate [4Fe-4S] cluster. The active-site Nucleophile; cysteine thiosulfonate intermediate is the C241.

Belongs to the PAPS reductase family. CysH subfamily. It depends on [4Fe-4S] cluster as a cofactor.

The protein localises to the cytoplasm. The catalysed reaction is [thioredoxin]-disulfide + sulfite + AMP + 2 H(+) = adenosine 5'-phosphosulfate + [thioredoxin]-dithiol. It functions in the pathway sulfur metabolism; hydrogen sulfide biosynthesis; sulfite from sulfate. In terms of biological role, catalyzes the formation of sulfite from adenosine 5'-phosphosulfate (APS) using thioredoxin as an electron donor. The protein is Adenosine 5'-phosphosulfate reductase of Agrobacterium fabrum (strain C58 / ATCC 33970) (Agrobacterium tumefaciens (strain C58)).